A 423-amino-acid chain; its full sequence is Phospholipase A1-IIalpha (423 aa).

Positions 194–217 form a coiled coil; the sequence is SAQEQVQGELKRLLELYKDEEISI. Ser-223 (acyl-ester intermediate) is an active-site residue. Residues Ser-223, Asp-290, and His-327 each act as charge relay system in the active site. The disordered stretch occupies residues 399-423; that stretch reads HDDDVDADDNDDSSTSNQLQELNTD. Acidic residues predominate over residues 401–410; that stretch reads DDVDADDNDD. The segment covering 411–423 has biased composition (polar residues); it reads SSTSNQLQELNTD.

Belongs to the AB hydrolase superfamily. Lipase family.

It is found in the cytoplasm. In terms of biological role, acylhydrolase that catalyzes the hydrolysis of phospholipids at the sn-1 position. The polypeptide is Phospholipase A1-IIalpha (Arabidopsis thaliana (Mouse-ear cress)).